The sequence spans 680 residues: DNA ligase (680 aa).

Residues 44–48, 94–95, and Glu-124 contribute to the NAD(+) site; these read DYIYD and SL. Catalysis depends on Lys-126, which acts as the N6-AMP-lysine intermediate. 4 residues coordinate NAD(+): Arg-147, Glu-181, Lys-297, and Lys-321. Zn(2+)-binding residues include Cys-415, Cys-418, Cys-433, and Cys-438. The BRCT domain occupies 598–680; the sequence is DENSFFYGKK…VDEQVKEDGK (83 aa).

The protein belongs to the NAD-dependent DNA ligase family. LigA subfamily. It depends on Mg(2+) as a cofactor. Mn(2+) serves as cofactor.

The enzyme catalyses NAD(+) + (deoxyribonucleotide)n-3'-hydroxyl + 5'-phospho-(deoxyribonucleotide)m = (deoxyribonucleotide)n+m + AMP + beta-nicotinamide D-nucleotide.. DNA ligase that catalyzes the formation of phosphodiester linkages between 5'-phosphoryl and 3'-hydroxyl groups in double-stranded DNA using NAD as a coenzyme and as the energy source for the reaction. It is essential for DNA replication and repair of damaged DNA. The chain is DNA ligase from Leuconostoc mesenteroides subsp. mesenteroides (strain ATCC 8293 / DSM 20343 / BCRC 11652 / CCM 1803 / JCM 6124 / NCDO 523 / NBRC 100496 / NCIMB 8023 / NCTC 12954 / NRRL B-1118 / 37Y).